We begin with the raw amino-acid sequence, 371 residues long: Lysine racemase (371 aa).

Residue lysine 39 is the Proton acceptor of the active site. N6-(pyridoxal phosphate)lysine is present on lysine 39. Arginine 135 lines the substrate pocket. The Proton acceptor role is filled by tyrosine 266. Residue methionine 313 coordinates substrate.

Belongs to the alanine racemase family. As to quaternary structure, homodimer. Pyridoxal 5'-phosphate is required as a cofactor.

It catalyses the reaction L-lysine = D-lysine. In terms of biological role, catalyzes the interconversion of D-lysine and L-lysine. Can also use arginine and ornithine, but not alanine. The sequence is that of Lysine racemase from Oenococcus oeni (strain ATCC BAA-331 / PSU-1).